The sequence spans 114 residues: Large ribosomal subunit protein bL19 (114 aa).

The protein belongs to the bacterial ribosomal protein bL19 family.

Functionally, this protein is located at the 30S-50S ribosomal subunit interface and may play a role in the structure and function of the aminoacyl-tRNA binding site. This chain is Large ribosomal subunit protein bL19, found in Bacillus cereus (strain AH187).